The following is a 294-amino-acid chain: UDP-3-O-acyl-N-acetylglucosamine deacetylase (294 aa).

The Zn(2+) site is built by H75, H232, and D236. Catalysis depends on H259, which acts as the Proton donor.

This sequence belongs to the LpxC family. Zn(2+) is required as a cofactor.

The enzyme catalyses a UDP-3-O-[(3R)-3-hydroxyacyl]-N-acetyl-alpha-D-glucosamine + H2O = a UDP-3-O-[(3R)-3-hydroxyacyl]-alpha-D-glucosamine + acetate. The protein operates within glycolipid biosynthesis; lipid IV(A) biosynthesis; lipid IV(A) from (3R)-3-hydroxytetradecanoyl-[acyl-carrier-protein] and UDP-N-acetyl-alpha-D-glucosamine: step 2/6. Functionally, catalyzes the hydrolysis of UDP-3-O-myristoyl-N-acetylglucosamine to form UDP-3-O-myristoylglucosamine and acetate, the committed step in lipid A biosynthesis. This Campylobacter fetus subsp. fetus (strain 82-40) protein is UDP-3-O-acyl-N-acetylglucosamine deacetylase.